A 218-amino-acid polypeptide reads, in one-letter code: Carnitine transport permease protein OpuCB (218 aa).

An ABC transmembrane type-1 domain is found at 19-198 (TWQHLFISLS…ILALVVEFAL (180 aa)). Helical transmembrane passes span 23–43 (LFIS…TGIL), 48–68 (PKVA…PSLA), 79–101 (VGTL…RNTF), 149–169 (VIAW…DFIF), and 179–199 (LILG…FALG).

Belongs to the binding-protein-dependent transport system permease family. The complex is composed of two ATP-binding proteins (OpuCA), two transmembrane proteins (OpuCB and OpuCD) and a solute-binding protein (OpuCC).

The protein localises to the cell membrane. In terms of biological role, part of the ABC transporter complex OpuCABCD involved in carnitine uptake. Probably responsible for the translocation of the substrate across the membrane. Involved, with BetL and GbuABC, in osmoprotection and cryoprotection of Listeria. The polypeptide is Carnitine transport permease protein OpuCB (opuCB) (Listeria monocytogenes).